The following is a 111-amino-acid chain: Putative pterin-4-alpha-carbinolamine dehydratase (111 aa).

The protein belongs to the pterin-4-alpha-carbinolamine dehydratase family.

It carries out the reaction (4aS,6R)-4a-hydroxy-L-erythro-5,6,7,8-tetrahydrobiopterin = (6R)-L-erythro-6,7-dihydrobiopterin + H2O. The protein is Putative pterin-4-alpha-carbinolamine dehydratase of Alkaliphilus metalliredigens (strain QYMF).